Here is a 493-residue protein sequence, read N- to C-terminus: Cobyric acid synthase (493 aa).

The region spanning 246-440 is the GATase cobBQ-type domain; that stretch reads PIDIAVIKMP…IHGVFDGVVF (195 aa). C326 (nucleophile) is an active-site residue. H432 is a catalytic residue.

This sequence belongs to the CobB/CobQ family. CobQ subfamily.

Its pathway is cofactor biosynthesis; adenosylcobalamin biosynthesis. Functionally, catalyzes amidations at positions B, D, E, and G on adenosylcobyrinic A,C-diamide. NH(2) groups are provided by glutamine, and one molecule of ATP is hydrogenolyzed for each amidation. The polypeptide is Cobyric acid synthase (Clostridium botulinum (strain Kyoto / Type A2)).